The primary structure comprises 328 residues: Flap endonuclease 1 (328 aa).

The N-domain stretch occupies residues 1 to 98 (MGVKFKDITN…ETQEERINIK (98 aa)). Mg(2+) contacts are provided by aspartate 27, aspartate 80, glutamate 152, glutamate 154, aspartate 173, aspartate 175, and aspartate 227. The I-domain stretch occupies residues 116-248 (AARKYAARTT…KGIKLIHKYG (133 aa)). The tract at residues 320 to 328 (AQSSLEDWF) is interaction with PCNA.

Belongs to the XPG/RAD2 endonuclease family. FEN1 subfamily. Interacts with PCNA. PCNA stimulates the nuclease activity without altering cleavage specificity. Mg(2+) is required as a cofactor.

Functionally, structure-specific nuclease with 5'-flap endonuclease and 5'-3' exonuclease activities involved in DNA replication and repair. During DNA replication, cleaves the 5'-overhanging flap structure that is generated by displacement synthesis when DNA polymerase encounters the 5'-end of a downstream Okazaki fragment. Binds the unpaired 3'-DNA end and kinks the DNA to facilitate 5' cleavage specificity. Cleaves one nucleotide into the double-stranded DNA from the junction in flap DNA, leaving a nick for ligation. Also involved in the base excision repair (BER) pathway. Acts as a genome stabilization factor that prevents flaps from equilibrating into structures that lead to duplications and deletions. Also possesses 5'-3' exonuclease activity on nicked or gapped double-stranded DNA. The sequence is that of Flap endonuclease 1 from Methanosphaera stadtmanae (strain ATCC 43021 / DSM 3091 / JCM 11832 / MCB-3).